A 182-amino-acid chain; its full sequence is Isopentenyl-diphosphate Delta-isomerase (182 aa).

Residues His25 and His32 each coordinate Mn(2+). One can recognise a Nudix hydrolase domain in the interval 30 to 164 (LLHLAFSSWL…PWAFSPWMVM (135 aa)). Residue Cys67 is part of the active site. Position 69 (His69) interacts with Mn(2+). Residue Glu87 participates in Mg(2+) binding. Residues Glu114 and Glu116 each coordinate Mn(2+). Glu116 is a catalytic residue.

This sequence belongs to the IPP isomerase type 1 family. As to quaternary structure, homodimer. Mg(2+) serves as cofactor. Requires Mn(2+) as cofactor.

It localises to the cytoplasm. It catalyses the reaction isopentenyl diphosphate = dimethylallyl diphosphate. It functions in the pathway isoprenoid biosynthesis; dimethylallyl diphosphate biosynthesis; dimethylallyl diphosphate from isopentenyl diphosphate: step 1/1. In terms of biological role, catalyzes the 1,3-allylic rearrangement of the homoallylic substrate isopentenyl (IPP) to its highly electrophilic allylic isomer, dimethylallyl diphosphate (DMAPP). The protein is Isopentenyl-diphosphate Delta-isomerase of Escherichia coli O17:K52:H18 (strain UMN026 / ExPEC).